We begin with the raw amino-acid sequence, 298 residues long: Protoheme IX farnesyltransferase (298 aa).

Transmembrane regions (helical) follow at residues 26–46, 52–72, 93–113, 120–140, 148–168, 174–194, 219–239, 241–261, and 278–298; these read VVSLIVFTAVIGMFLSVPGAV, IFGTVGISLVAGAAAALNCLV, VSVPETLFFLVLIGGFGLFML, LTMWLTLGTFVGYAIIYTVIL, IVIGGASGAMPPVLGWAAVTG, ALLLFLIIFAWTPPHFWALAL, LHVLLYTIILCVVTVLPYLTQ, SGLIYLGSVLILDAIFFYYAI, and YSIAYLALLFTALLVDHYFYF.

It belongs to the UbiA prenyltransferase family. Protoheme IX farnesyltransferase subfamily.

The protein resides in the cell inner membrane. The enzyme catalyses heme b + (2E,6E)-farnesyl diphosphate + H2O = Fe(II)-heme o + diphosphate. Its pathway is porphyrin-containing compound metabolism; heme O biosynthesis; heme O from protoheme: step 1/1. Converts heme B (protoheme IX) to heme O by substitution of the vinyl group on carbon 2 of heme B porphyrin ring with a hydroxyethyl farnesyl side group. The sequence is that of Protoheme IX farnesyltransferase from Nitrosomonas europaea (strain ATCC 19718 / CIP 103999 / KCTC 2705 / NBRC 14298).